The following is a 275-amino-acid chain: Interleukin-2 receptor subunit alpha (275 aa).

The first 21 residues, 1-21 (MEPSLLMWRFFVFIVVPGCVT), serve as a signal peptide directing secretion. Residues 22–81 (EACHDDPPSLRNAMFKVFRYEVGTMINCDCKTGFRRVSAVMRCVGDSSHSAWENRCFCNS) enclose the Sushi 1 domain. Residues 22-243 (EACHDDPPSL…DTFIFTTEYQ (222 aa)) are Extracellular-facing. 3 cysteine pairs are disulfide-bonded: cysteine 24-cysteine 64, cysteine 49-cysteine 77, and cysteine 51-cysteine 79. A glycan (N-linked (GlcNAc...) asparagine) is linked at asparagine 80. The interval 88-130 (QVKQVTPAPEEHREKKHTDAQNQTQPPEEADLPGHCEEPPPWE) is disordered. Basic and acidic residues predominate over residues 96 to 106 (PEEHREKKHTD). A glycan (N-linked (GlcNAc...) asparagine) is linked at asparagine 109. The segment covering 119–130 (LPGHCEEPPPWE) has biased composition (basic and acidic residues). One can recognise a Sushi 2 domain in the interval 121–186 (GHCEEPPPWE…WTRPRLKCIR (66 aa)). Disulfide bonds link cysteine 123-cysteine 168 and cysteine 152-cysteine 184. The interval 188–221 (GEHGQASDDAEPQESTEAPPGSGTFLPTRMAGTT) is disordered. Residues 244–262 (IAVAGCTLLLASILLLSCL) form a helical membrane-spanning segment. Over 263–275 (TWQRKWKKNRRTI) the chain is Cytoplasmic.

In terms of assembly, non-covalent dimer of an alpha and a beta subunit. IL2R exists in 3 different forms: a high affinity dimer, an intermediate affinity monomer (beta subunit), and a low affinity monomer (alpha subunit). The high and intermediate affinity forms also associate with a gamma subunit.

It is found in the membrane. Receptor for interleukin-2. The receptor is involved in the regulation of immune tolerance by controlling regulatory T cells (TREGs) activity. TREGs suppress the activation and expansion of autoreactive T-cells. In Bos taurus (Bovine), this protein is Interleukin-2 receptor subunit alpha (IL2RA).